The chain runs to 155 residues: NADH-ubiquinone oxidoreductase chain 6 (155 aa).

4 consecutive transmembrane segments (helical) span residues 10–30 (ILAI…VLFV), 43–63 (LMGI…FLFI), 75–95 (GTIH…LDLS), and 133–153 (AIPM…AIAI).

Belongs to the complex I subunit 6 family.

Its subcellular location is the mitochondrion membrane. The enzyme catalyses a ubiquinone + NADH + 5 H(+)(in) = a ubiquinol + NAD(+) + 4 H(+)(out). In terms of biological role, core subunit of the mitochondrial membrane respiratory chain NADH dehydrogenase (Complex I) that is believed to belong to the minimal assembly required for catalysis. Complex I functions in the transfer of electrons from NADH to the respiratory chain. The immediate electron acceptor for the enzyme is believed to be ubiquinone. The chain is NADH-ubiquinone oxidoreductase chain 6 (ND6) from Candida parapsilosis (Yeast).